The following is a 300-amino-acid chain: Protein sprouty homolog 4 (300 aa).

Met-1 is modified (N-acetylmethionine). 2 disordered regions span residues 1-28 (MEPPVPQSSVPVNPSSVMVQPLLDSRAP) and 52-114 (DYID…RLLD). Low complexity-rich tracts occupy residues 7 to 21 (QSSVPVNPSSVMVQP) and 92 to 108 (SFSGRPSSVSSSSSTSS). Ser-126 bears the Phosphoserine mark. In terms of domain architecture, SPR spans 167-274 (KCKECASPRT…GYDRLRRPGC (108 aa)).

The protein belongs to the sprouty family. As to quaternary structure, interacts (via C-terminus) with TESK1 (via both C- and N-termini); the interaction inhibits TESK1 kinase activity. Interacts with RAF1. Interacts with CAV1 (via C-terminus). In terms of tissue distribution, expressed in the embryo and adult tissues including heart, brain, lung, kidney, and skeletal muscle.

It is found in the cytoplasm. The protein localises to the cell projection. Its subcellular location is the ruffle membrane. Its function is as follows. Suppresses the insulin receptor and EGFR-transduced MAPK signaling pathway, but does not inhibit MAPK activation by a constitutively active mutant Ras. Probably impairs the formation of GTP-Ras. Inhibits Ras-independent, but not Ras-dependent, activation of RAF1. Represses integrin-mediated cell spreading via inhibition of TESK1-mediated phosphorylation of cofilin. This is Protein sprouty homolog 4 (Spry4) from Mus musculus (Mouse).